The sequence spans 274 residues: MKKTQTWIITCIYLQLLLFNPLVHSQGICRNRVTDDVKDVTKLVANLPKDYMITLKYVPGMDVLPSHCWISEMVEQLSVSLTDLLDKFSNISEGLSNYSIIDKLVKIVDDLVECMEEHSFENVKKSSKSPEPRQFTPEKFFGIFNKSIDAFKDLEIVASTMSECVISSTSSPEKDSRVSVTKPFMLPPVAASSLRNDSSSSNRKASNSIEDSSLQWAAVALPAFFSLVIGFAFGALYWKKKQPNLTRTVENRQINEEDNEISMLQEKEREFQEV.

An N-terminal signal peptide occupies residues 1–25; sequence MKKTQTWIITCIYLQLLLFNPLVHS. Gln-26 is modified (pyrrolidone carboxylic acid). The Extracellular segment spans residues 26-215; it reads QGICRNRVTD…SNSIEDSSLQ (190 aa). Cystine bridges form between Cys-29-Cys-114 and Cys-68-Cys-164. 4 N-linked (GlcNAc...) asparagine glycosylation sites follow: Asn-90, Asn-97, Asn-145, and Asn-196. The helical transmembrane segment at 216–238 threads the bilayer; the sequence is WAAVALPAFFSLVIGFAFGALYW. The Cytoplasmic segment spans residues 239–274; the sequence is KKKQPNLTRTVENRQINEEDNEISMLQEKEREFQEV.

The protein belongs to the SCF family. Homodimer, non-covalently linked. A soluble form is produced by proteolytic processing of the extracellular domain.

It is found in the cytoplasm. The protein resides in the cytoskeleton. It localises to the cell membrane. Its subcellular location is the cell projection. The protein localises to the lamellipodium. It is found in the filopodium. The protein resides in the secreted. Functionally, stimulates the proliferation of mast cells. Able to augment the proliferation of both myeloid and lymphoid hematopoietic progenitors in bone marrow culture. Also mediates cell-cell adhesion. Acts synergistically with other cytokines, probably interleukins. The polypeptide is Kit ligand (KITLG) (Capra hircus (Goat)).